The primary structure comprises 115 residues: Large ribosomal subunit protein bL20c (115 aa).

This sequence belongs to the bacterial ribosomal protein bL20 family.

The protein resides in the plastid. It localises to the chloroplast. Its function is as follows. Binds directly to 23S ribosomal RNA and is necessary for the in vitro assembly process of the 50S ribosomal subunit. It is not involved in the protein synthesizing functions of that subunit. The protein is Large ribosomal subunit protein bL20c of Pyropia yezoensis (Susabi-nori).